The sequence spans 453 residues: Signal recognition particle protein (453 aa).

GTP-binding positions include 107 to 114 (GLQGAGKT), 190 to 194 (DTAGR), and 248 to 251 (TKVD).

It belongs to the GTP-binding SRP family. SRP54 subfamily. Part of the signal recognition particle protein translocation system, which is composed of SRP and FtsY. SRP is a ribonucleoprotein composed of Ffh and a 4.5S RNA molecule.

The protein localises to the cytoplasm. It catalyses the reaction GTP + H2O = GDP + phosphate + H(+). In terms of biological role, involved in targeting and insertion of nascent membrane proteins into the cytoplasmic membrane. Binds to the hydrophobic signal sequence of the ribosome-nascent chain (RNC) as it emerges from the ribosomes. The SRP-RNC complex is then targeted to the cytoplasmic membrane where it interacts with the SRP receptor FtsY. Interaction with FtsY leads to the transfer of the RNC complex to the Sec translocase for insertion into the membrane, the hydrolysis of GTP by both Ffh and FtsY, and the dissociation of the SRP-FtsY complex into the individual components. This is Signal recognition particle protein from Escherichia coli O157:H7.